Reading from the N-terminus, the 458-residue chain is KAT8 regulatory NSL complex subunit 2 (458 aa).

Lysine 78 participates in a covalent cross-link: Glycyl lysine isopeptide (Lys-Gly) (interchain with G-Cter in SUMO2). Positions 126-182 (ELGSQTPESSRSEASRILDEDSWSDGDQEPITVDQTWRGDPDSEADSIDSDQEDPLK) are disordered. Threonine 131 carries the post-translational modification Phosphothreonine. Over residues 135–144 (SRSEASRILD) the composition is skewed to basic and acidic residues. Serine 147, serine 149, serine 168, serine 172, and serine 175 each carry phosphoserine. A compositionally biased stretch (acidic residues) spans 167–178 (DSEADSIDSDQE). A required for interaction with other NSL complex members region spans residues 308 to 364 (DVRCSNQSLPMTRHCLTHICQDTNQVLFKCCQGSEEVPCNKPVPVSLSEDPCCPLHF). The interval 419-458 (QMAGDGCRSQGPRNSEKAPAPLPQSGIATANGKPEPTSVS) is disordered.

As to quaternary structure, component of the NSL complex at least composed of KAT8/MOF, KANSL1, KANSL2, KANSL3, MCRS1, PHF20, OGT1/OGT, WDR5 and HCFC1.

It is found in the nucleus. Its subcellular location is the mitochondrion. In terms of biological role, non-catalytic component of the NSL histone acetyltransferase complex, a multiprotein complex that mediates histone H4 acetylation at 'Lys-5'- and 'Lys-8' (H4K5ac and H4K8ac) at transcription start sites and promotes transcription initiation. Required for NSL complex stability and for transcription of intraciliary transport genes in both ciliated and non-ciliated cells by regulating histone H4 acetylation at 'Lys-5'- and 'Lys-12' (H4K5ac and H4K12ac). This is necessary for cilium assembly in ciliated cells and for organization of the microtubule cytoskeleton in non-ciliated cells. Required within the NSL complex to maintain nuclear architecture stability by promoting KAT8-mediated acetylation of lamin LMNA. The sequence is that of KAT8 regulatory NSL complex subunit 2 (KANSL2) from Bos taurus (Bovine).